We begin with the raw amino-acid sequence, 132 residues long: Phosphoribosyl-AMP cyclohydrolase (132 aa).

Asp85 serves as a coordination point for Mg(2+). Residue Cys86 coordinates Zn(2+). Mg(2+)-binding residues include Asp87 and Asp89. Residues Cys102 and Cys109 each contribute to the Zn(2+) site.

Belongs to the PRA-CH family. In terms of assembly, homodimer. Requires Mg(2+) as cofactor. It depends on Zn(2+) as a cofactor.

Its subcellular location is the cytoplasm. It carries out the reaction 1-(5-phospho-beta-D-ribosyl)-5'-AMP + H2O = 1-(5-phospho-beta-D-ribosyl)-5-[(5-phospho-beta-D-ribosylamino)methylideneamino]imidazole-4-carboxamide. It functions in the pathway amino-acid biosynthesis; L-histidine biosynthesis; L-histidine from 5-phospho-alpha-D-ribose 1-diphosphate: step 3/9. In terms of biological role, catalyzes the hydrolysis of the adenine ring of phosphoribosyl-AMP. This Frankia alni (strain DSM 45986 / CECT 9034 / ACN14a) protein is Phosphoribosyl-AMP cyclohydrolase.